The chain runs to 130 residues: Large ribosomal subunit protein bL17 (130 aa).

This sequence belongs to the bacterial ribosomal protein bL17 family. In terms of assembly, part of the 50S ribosomal subunit. Contacts protein L32.

The protein is Large ribosomal subunit protein bL17 of Shewanella pealeana (strain ATCC 700345 / ANG-SQ1).